The chain runs to 248 residues: Putative TrmH family tRNA/rRNA methyltransferase (248 aa).

The S-adenosyl-L-methionine site is built by G196, I216, and L225.

Belongs to the class IV-like SAM-binding methyltransferase superfamily. RNA methyltransferase TrmH family.

The sequence is that of Putative TrmH family tRNA/rRNA methyltransferase from Staphylococcus aureus (strain Mu50 / ATCC 700699).